Here is a 173-residue protein sequence, read N- to C-terminus: ATP synthase subunit delta (173 aa).

This sequence belongs to the ATPase delta chain family. F-type ATPases have 2 components, F(1) - the catalytic core - and F(0) - the membrane proton channel. F(1) has five subunits: alpha(3), beta(3), gamma(1), delta(1), epsilon(1). F(0) has three main subunits: a(1), b(2) and c(10-14). The alpha and beta chains form an alternating ring which encloses part of the gamma chain. F(1) is attached to F(0) by a central stalk formed by the gamma and epsilon chains, while a peripheral stalk is formed by the delta and b chains.

It localises to the cell inner membrane. Its function is as follows. F(1)F(0) ATP synthase produces ATP from ADP in the presence of a proton or sodium gradient. F-type ATPases consist of two structural domains, F(1) containing the extramembraneous catalytic core and F(0) containing the membrane proton channel, linked together by a central stalk and a peripheral stalk. During catalysis, ATP synthesis in the catalytic domain of F(1) is coupled via a rotary mechanism of the central stalk subunits to proton translocation. Functionally, this protein is part of the stalk that links CF(0) to CF(1). It either transmits conformational changes from CF(0) to CF(1) or is implicated in proton conduction. The sequence is that of ATP synthase subunit delta from Campylobacter jejuni subsp. jejuni serotype O:2 (strain ATCC 700819 / NCTC 11168).